Consider the following 500-residue polypeptide: Glutamate--tRNA ligase (500 aa).

The 'HIGH' region signature appears at 12–22 (PSPTGHLHIGN). The short motif at 259-263 (KLSKR) is the 'KMSKS' region element. Residue K262 participates in ATP binding.

It belongs to the class-I aminoacyl-tRNA synthetase family. Glutamate--tRNA ligase type 1 subfamily. Monomer.

It localises to the cytoplasm. The catalysed reaction is tRNA(Glu) + L-glutamate + ATP = L-glutamyl-tRNA(Glu) + AMP + diphosphate. In terms of biological role, catalyzes the attachment of glutamate to tRNA(Glu) in a two-step reaction: glutamate is first activated by ATP to form Glu-AMP and then transferred to the acceptor end of tRNA(Glu). This Lactobacillus delbrueckii subsp. bulgaricus (strain ATCC 11842 / DSM 20081 / BCRC 10696 / JCM 1002 / NBRC 13953 / NCIMB 11778 / NCTC 12712 / WDCM 00102 / Lb 14) protein is Glutamate--tRNA ligase.